We begin with the raw amino-acid sequence, 470 residues long: MSSCSSLSMDDRVKIGYGSIAGASLSIIGSIGTIILIKIRNKKQEKKLLIQRKQQLSINNLNINSGSSSNIITISNSTTSLSSNNLNIQPPSFPSYSPLPTSISLSNNNNNNKNNNQKTKVSHFIINLSIANLLASIFMITIKLMMIHFNDKFIKVLPSTANHSFNALISVCTIGNGVIGFSFISTFFWTLAISMYIYQQFLSSSTINSNNNNNNINNINNNNNNNINNINNSKNNNSINNFNNSNKSNKIIKMLFYFVCWVIPFVLGSILVSGSRLIELNSDLPWCSIDSNIQLISFYFPLIICLLATTFFTILIKYKFSNDKLACSSSSLINLQSKIIQRLILFLIVILVCWVPSLISFFISFFSKNCKQFLWLEIISSTIQSCQGILNFLSYLSIFKKLKLYFKNLKKKFNNNNSNNSNNSNNNNSNNFNGGGIFYSKGKKVNNQNSNNFYFTFSTFDFDNNQIQEK.

Residues 1 to 16 (MSSCSSLSMDDRVKIG) are Extracellular-facing. Residues 17 to 37 (YGSIAGASLSIIGSIGTIILI) traverse the membrane as a helical segment. At 38–123 (KIRNKKQEKK…NNNQKTKVSH (86 aa)) the chain is on the cytoplasmic side. A helical transmembrane segment spans residues 124 to 144 (FIINLSIANLLASIFMITIKL). The Extracellular portion of the chain corresponds to 145–176 (MMIHFNDKFIKVLPSTANHSFNALISVCTIGN). Residue Asn-162 is glycosylated (N-linked (GlcNAc...) asparagine). A disulfide bridge links Cys-172 with Cys-287. A helical membrane pass occupies residues 177–197 (GVIGFSFISTFFWTLAISMYI). Topologically, residues 198–253 (YQQFLSSSTINSNNNNNNINNINNNNNNNINNINNSKNNNSINNFNNSNKSNKIIK) are cytoplasmic. The chain crosses the membrane as a helical span at residues 254–274 (MLFYFVCWVIPFVLGSILVSG). At 275–295 (SRLIELNSDLPWCSIDSNIQL) the chain is on the extracellular side. Residues 296–316 (ISFYFPLIICLLATTFFTILI) traverse the membrane as a helical segment. At 317 to 342 (KYKFSNDKLACSSSSLINLQSKIIQR) the chain is on the cytoplasmic side. Residues 343–363 (LILFLIVILVCWVPSLISFFI) traverse the membrane as a helical segment. The Extracellular portion of the chain corresponds to 364 to 372 (SFFSKNCKQ). Residues 373–393 (FLWLEIISSTIQSCQGILNFL) form a helical membrane-spanning segment. Residues 394–470 (SYLSIFKKLK…DFDNNQIQEK (77 aa)) are Cytoplasmic-facing.

The protein belongs to the G-protein coupled receptor 5 family.

It is found in the membrane. Functionally, receptor for cAMP. This Dictyostelium discoideum (Social amoeba) protein is Cyclic AMP receptor-like protein D (crlD).